The primary structure comprises 380 residues: Alkaline protease (380 aa).

Residues 1–27 (MKKPLGKIVASTALLISVAFSSSIASA) form the signal peptide. A propeptide spanning residues 28 to 111 (AEEAKEKYLI…IEEDAEVTTM (84 aa)) is cleaved from the precursor. In terms of domain architecture, Inhibitor I9 spans 34 to 111 (KYLIGFNEQE…IEEDAEVTTM (78 aa)). Q113 is a binding site for Ca(2+). The 264-residue stretch at 116-379 (PWGISRVQAP…SGLVNAEAAT (264 aa)) folds into the Peptidase S8 domain. Catalysis depends on D143, which acts as the Charge relay system. D151 lines the Ca(2+) pocket. H173 (charge relay system) is an active-site residue. The Ca(2+) site is built by L184, N186, I188, V190, A274, Y276, and A279. S326 (charge relay system) is an active-site residue.

This sequence belongs to the peptidase S8 family. The cofactor is Ca(2+).

The protein localises to the secreted. The polypeptide is Alkaline protease (Shouchella clausii (Alkalihalobacillus clausii)).